A 621-amino-acid polypeptide reads, in one-letter code: uncharacterized protein (621 aa).

5 positions are modified to phosphoserine: S269, S271, S274, S290, and S292. LRR repeat units follow at residues 333–354, 357–379, 380–401, 404–425, 426–447, and 451–472; these read QLLY…VFLS, SLVS…GELP, QLCS…YHIS, HLQI…ENVP, SLEK…RRLV, and NFEE…YRIT. Positions 552–581 are disordered; it reads SKNASGGDTSSNVSLLNGSASEEIPQNTES.

Its subcellular location is the cytoplasm. The protein localises to the nucleus. It localises to the vacuole membrane. This is an uncharacterized protein from Schizosaccharomyces pombe (strain 972 / ATCC 24843) (Fission yeast).